Here is a 307-residue protein sequence, read N- to C-terminus: Homoserine kinase (307 aa).

92–102 (PLARGLGSSAT) provides a ligand contact to ATP.

The protein belongs to the GHMP kinase family. Homoserine kinase subfamily.

The protein localises to the cytoplasm. The enzyme catalyses L-homoserine + ATP = O-phospho-L-homoserine + ADP + H(+). The protein operates within amino-acid biosynthesis; L-threonine biosynthesis; L-threonine from L-aspartate: step 4/5. Its function is as follows. Catalyzes the ATP-dependent phosphorylation of L-homoserine to L-homoserine phosphate. This chain is Homoserine kinase (thrB), found in Microchaete diplosiphon (Fremyella diplosiphon).